A 410-amino-acid chain; its full sequence is MGAQVRLPPGEPCQEGYVLSLVCPNSSQAWCEITNVSQLLASPVLYTDLNSSINKLSISANVENKYSLYVGLVLAVSSSIFIGSSFILKKKGLLQLASKGITRAGQGGHSYLKEWLWWVGLLSMGVGEAANFAAYAFAPATLVTPLGALSVLISAILSSYFLNEHLNIHGKIGCILSILGSTVMVIHAPQEEEVTSLHEMEMKLRDPGFISFAVIVTVISLVLILIVAPKKGQTNILVYISICSLIGAFSVSSVKGLGIAIKELIEWKPVYKHPLVFVLLAVLVLSVTTQINYLNKALDTFNTSIVTPIYYVFFTSMVVTCSAILFQEWYGMTAGDIIGTLSGFFTIIIGIFLLHAFKNTDITWSELTSTAKKEAVSLNVSENNYVLLENLECSAPGYNDDVTLFSRTDD.

Residues Met-1–Ser-67 are Extracellular-facing. Asn-25, Asn-35, and Asn-50 each carry an N-linked (GlcNAc...) asparagine glycan. Residues Leu-68–Leu-88 form a helical membrane-spanning segment. Over Lys-89 to Glu-114 the chain is Cytoplasmic. The helical transmembrane segment at Trp-115 to Tyr-135 threads the bilayer. Ala-136 is a topological domain (extracellular). A helical membrane pass occupies residues Phe-137–Leu-157. The Cytoplasmic segment spans residues Ser-158–His-165. The chain crosses the membrane as a helical span at residues Leu-166–Ile-186. The Extracellular segment spans residues His-187–Pro-207. A helical membrane pass occupies residues Gly-208–Ala-228. Topologically, residues Pro-229–Gln-233 are cytoplasmic. Residues Thr-234–Val-254 form a helical membrane-spanning segment. Topologically, residues Lys-255–His-273 are extracellular. The chain crosses the membrane as a helical span at residues Pro-274–Leu-294. The Cytoplasmic segment spans residues Asn-295–Ser-304. The helical transmembrane segment at Ile-305 to Leu-325 threads the bilayer. The Extracellular segment spans residues Phe-326 to Asp-336. Residues Ile-337 to Phe-357 form a helical membrane-spanning segment. Residues Lys-358–Asp-410 lie on the Cytoplasmic side of the membrane.

The protein belongs to the NIPA family.

Its subcellular location is the golgi apparatus membrane. The catalysed reaction is Mg(2+)(in) = Mg(2+)(out). Acts as a Mg(2+) transporter. Can also transport other divalent cations such as Fe(2+), Sr(2+), Ba(2+), Mn(2+), Cu(2+) and Co(2+) but to a much less extent than Mg(2+). The protein is Magnesium transporter NIPA3 (NIPAL1) of Pongo abelii (Sumatran orangutan).